Consider the following 202-residue polypeptide: Na(+)-translocating NADH-quinone reductase subunit E (202 aa).

The next 6 helical transmembrane spans lie at 5–25 (VSLFITSVFIENMALAYFLGM), 35–55 (VSTAIGLGVAVIVVMSITVPL), 81–101 (FLGLLSYIALIAATVQILEMF), 114–134 (GVFLPLITVNCAIMGGVLFMV), 144–164 (LTYGVGAGFGWALAIALLAGI), and 180–200 (LGITFITVGLMSLGFMSFGGM).

It belongs to the NqrDE/RnfAE family. As to quaternary structure, composed of six subunits; NqrA, NqrB, NqrC, NqrD, NqrE and NqrF.

It is found in the cell inner membrane. The enzyme catalyses a ubiquinone + n Na(+)(in) + NADH + H(+) = a ubiquinol + n Na(+)(out) + NAD(+). Its function is as follows. NQR complex catalyzes the reduction of ubiquinone-1 to ubiquinol by two successive reactions, coupled with the transport of Na(+) ions from the cytoplasm to the periplasm. NqrA to NqrE are probably involved in the second step, the conversion of ubisemiquinone to ubiquinol. This chain is Na(+)-translocating NADH-quinone reductase subunit E, found in Psychrobacter sp. (strain PRwf-1).